The primary structure comprises 497 residues: Anthranilate synthase component 1 (497 aa).

Residues Ser-49 and 271–273 contribute to the L-tryptophan site; that span reads PYL. Residue 312-313 participates in chorismate binding; sequence GT. Glu-339 contributes to the Mg(2+) binding site. Residues Arg-447, 461 to 463, and Gly-463 each bind chorismate; that span reads GAG. Glu-476 serves as a coordination point for Mg(2+).

Belongs to the anthranilate synthase component I family. Heterotetramer consisting of two non-identical subunits: a beta subunit (TrpG) and a large alpha subunit (TrpE). Mg(2+) is required as a cofactor.

It catalyses the reaction chorismate + L-glutamine = anthranilate + pyruvate + L-glutamate + H(+). Its pathway is amino-acid biosynthesis; L-tryptophan biosynthesis; L-tryptophan from chorismate: step 1/5. Feedback inhibited by tryptophan. Functionally, part of a heterotetrameric complex that catalyzes the two-step biosynthesis of anthranilate, an intermediate in the biosynthesis of L-tryptophan. In the first step, the glutamine-binding beta subunit (TrpG) of anthranilate synthase (AS) provides the glutamine amidotransferase activity which generates ammonia as a substrate that, along with chorismate, is used in the second step, catalyzed by the large alpha subunit of AS (TrpE) to produce anthranilate. In the absence of TrpG, TrpE can synthesize anthranilate directly from chorismate and high concentrations of ammonia. The chain is Anthranilate synthase component 1 (trpE) from Acinetobacter calcoaceticus.